Consider the following 89-residue polypeptide: Dynein light chain LC6, flagellar outer arm (89 aa).

Belongs to the dynein light chain family. In terms of assembly, consists of at least 3 heavy chains (alpha, beta and gamma), 2 intermediate chains and 8 light chains.

The protein localises to the cytoplasm. It is found in the cytoskeleton. It localises to the flagellum axoneme. This chain is Dynein light chain LC6, flagellar outer arm, found in Heliocidaris crassispina (Sea urchin).